We begin with the raw amino-acid sequence, 309 residues long: Foldase protein PrsA 2 (309 aa).

The first 22 residues, 1 to 22 (MKQMNKLITGVVTLATVVTLSA), serve as a signal peptide directing secretion. Cys-23 is lipidated: N-palmitoyl cysteine. Cys-23 carries S-diacylglycerol cysteine lipidation. One can recognise a PpiC domain in the interval 146–241 (TPTMTAEIMQ…RTYHIIKVTK (96 aa)).

The protein belongs to the PrsA family.

The protein resides in the cell membrane. The catalysed reaction is [protein]-peptidylproline (omega=180) = [protein]-peptidylproline (omega=0). Plays a major role in protein secretion by helping the post-translocational extracellular folding of several secreted proteins. The sequence is that of Foldase protein PrsA 2 (prsA2) from Streptococcus pyogenes serotype M1.